A 569-amino-acid chain; its full sequence is Ribonuclease J (569 aa).

The Zn(2+) site is built by His81, His83, Asp85, His86, His150, and Asp172. 373 to 377 (HASGH) is a binding site for substrate. His399 provides a ligand contact to Zn(2+).

This sequence belongs to the metallo-beta-lactamase superfamily. RNA-metabolizing metallo-beta-lactamase-like family. Bacterial RNase J subfamily. In terms of assembly, homodimer, may be a subunit of the RNA degradosome. The cofactor is Zn(2+).

The protein localises to the cytoplasm. Functionally, an RNase that has 5'-3' exonuclease and possibly endoonuclease activity. Involved in maturation of rRNA and in some organisms also mRNA maturation and/or decay. The chain is Ribonuclease J from Mycoplasma genitalium (strain ATCC 33530 / DSM 19775 / NCTC 10195 / G37) (Mycoplasmoides genitalium).